We begin with the raw amino-acid sequence, 313 residues long: 18S rRNA aminocarboxypropyltransferase (313 aa).

Positions 1–30 (MGKGKNKMHEPKNGRPQRGANGHSSRQNHR) are disordered. S-adenosyl-L-methionine-binding residues include S62, V110, L133, and W148. Positions 215 to 228 (KETQERKSRAKEED) are enriched in basic and acidic residues. Residues 215-313 (KETQERKSRA…SYDPLGNLIR (99 aa)) form a disordered region. Over residues 237–246 (RRGNGSQSDT) the composition is skewed to polar residues. Positions 247-257 (SESEENSEQSD) are enriched in acidic residues. Residues S286 and S289 each carry the phosphoserine modification.

This sequence belongs to the TDD superfamily. TSR3 family.

It is found in the cytoplasm. Its subcellular location is the nucleus. It catalyses the reaction an N(1)-methylpseudouridine in rRNA + S-adenosyl-L-methionine = N(1)-methyl-N(3)-[(3S)-3-amino-3-carboxypropyl]pseudouridine in rRNA + S-methyl-5'-thioadenosine + H(+). It carries out the reaction N(1)-methylpseudouridine(1191) in yeast 18S rRNA + S-adenosyl-L-methionine = N(1)-methyl-N(3)-[(3S)-3-amino-3-carboxypropyl]pseudouridine(1191) in yeast 18S rRNA + S-methyl-5'-thioadenosine + H(+). In terms of biological role, aminocarboxypropyltransferase that catalyzes the aminocarboxypropyl transfer on pseudouridine at position 1191 (Psi1191) in 18S rRNA. It constitutes the last step in biosynthesis of the hypermodified N1-methyl-N3-(3-amino-3-carboxypropyl) pseudouridine (m1acp3-Psi) conserved in eukaryotic 18S rRNA. Required for processing 35S pre-rRNA at site D. This Saccharomyces cerevisiae (strain ATCC 204508 / S288c) (Baker's yeast) protein is 18S rRNA aminocarboxypropyltransferase.